Reading from the N-terminus, the 342-residue chain is Mitogen-activated protein kinase kinase kinase 20 (342 aa).

The Protein kinase domain maps to 3–268; sequence WVRGETIGFG…AEMLLNHSFV (266 aa). Residue 9–17 coordinates ATP; sequence IGFGTFSTV. Ser-18 is subject to Phosphoserine. Thr-19 is modified (phosphothreonine). An ATP-binding site is contributed by Lys-36. Phosphotyrosine is present on residues Tyr-41 and Tyr-66. Residues Ser-93 and Ser-114 each carry the phosphoserine modification. The active-site Proton acceptor is the Asp-131. The segment at 285 to 342 is required for MKK3 binding; the sequence is KDEDKVLMSPKCPFEFDDWDSFTLDSNPSFDSPVERLGSLVSGSIPDWSVGGSWLTVR.

It belongs to the protein kinase superfamily. Ser/Thr protein kinase family. In terms of assembly, interacts with MKK3 and MPK18 via its C-terminal domain. Binds to MKK5. Autophosphorylates; active in phosphorylated state. Dephosphorylated by ABI1. Expressed in roots, seedlings, leaves, flower buds, flowers and siliques.

The protein localises to the nucleus. Its subcellular location is the cytoplasm. The catalysed reaction is L-seryl-[protein] + ATP = O-phospho-L-seryl-[protein] + ADP + H(+). It carries out the reaction L-threonyl-[protein] + ATP = O-phospho-L-threonyl-[protein] + ADP + H(+). With respect to regulation, activated through serine, threonine and tyrosine phosphorylation, especially upon abscisic acid (ABA) treatment. Restricted activity by ABI1-mediated dephosphorylation. Functionally, mitogen-activated protein kinase kinase (MAPKK) that phosphorylates both MKK3 and MPK18 and regulate two separate signaling pathways involved in root microtubule functions. MAPKK which regulates abscisic acid (ABA) responses in a MAPKKK20-MKK5-MPK6 cascade involved in root growth (e.g. root cell division and elongation) and stomatal response, probably via MKK5 activation by protein phosphorylation and subsequent activation of MAPK6 by MKK5. Involved in various abiotic stresses (e.g. osmotic stress, cold and hydrogen peroxide) responses by phosphorylating and thus regulating MPK6 activity, in an ABA-independent manner. This chain is Mitogen-activated protein kinase kinase kinase 20, found in Arabidopsis thaliana (Mouse-ear cress).